Here is a 589-residue protein sequence, read N- to C-terminus: MTKTKGKVVGINGNMISVSFEGLVTLNEVGYVEVGSKKLKSEVIRIRGEVAQLQVFEITKGIKVGDIVEFTGDLLSVELGPGLLGQVYDGLQNPLPELAEQAGYFLERGIYLNALSRTAKWHFTPSAKEGDTLKRADLLGTVPEGSFTHRIMIPFNMYGTYKLKSIKPEGDYTVDDTIAEVTDERGNVIPLTMSFKWPVKRAIDCYAERLKPTETLVTKMRTMDTFFPVAKGGTYCIPGPFGAGKTVLQHATSRNADVDIVIIAACGERAGEVVETLTEFPELKDPKTGRTLMERTIIICNTSSMPVAAREASVYTGVTLAEYYRQMGLDVLLLADSTSRWAQALREMSGRLEEIPGEEAFPAYLESYIAAFYERAGIVRLSDGSKGSVTIGGTVSPAGGNFEEPVTQATLKVVGAFHGLSRERSDARKYPAIHPLDSWSKYPSVLPLEQVKYGRSFLRRGTEVEQMMKVVGEEGTSIEDFIIYLKGDLLDAVYLQQNSFDKVDDAVSVERQQHIYNILIEILGTSFKFVSKDEARSYFSKLKLMFIDYNYSPWGSDAFKSHEDGIKKHIAEKADSLDERAKKLLKQAV.

239 to 246 contacts ATP; the sequence is GPFGAGKT.

Belongs to the ATPase alpha/beta chains family.

The enzyme catalyses ATP + H2O + 4 H(+)(in) = ADP + phosphate + 5 H(+)(out). Functionally, produces ATP from ADP in the presence of a proton gradient across the membrane. The V-type alpha chain is a catalytic subunit. The protein is V-type ATP synthase alpha chain of Treponema denticola (strain ATCC 35405 / DSM 14222 / CIP 103919 / JCM 8153 / KCTC 15104).